We begin with the raw amino-acid sequence, 513 residues long: 2-isopropylmalate synthase (513 aa).

The region spanning 5-267 (LVIFDTTLRD…ETRIDTTQIV (263 aa)) is the Pyruvate carboxyltransferase domain. Mn(2+) is bound by residues D14, H202, H204, and N238. The regulatory domain stretch occupies residues 393–513 (KLVYSRVCSE…LDKVKAQGGV (121 aa)).

Belongs to the alpha-IPM synthase/homocitrate synthase family. LeuA type 1 subfamily. As to quaternary structure, homodimer. Mn(2+) is required as a cofactor.

Its subcellular location is the cytoplasm. The enzyme catalyses 3-methyl-2-oxobutanoate + acetyl-CoA + H2O = (2S)-2-isopropylmalate + CoA + H(+). The protein operates within amino-acid biosynthesis; L-leucine biosynthesis; L-leucine from 3-methyl-2-oxobutanoate: step 1/4. In terms of biological role, catalyzes the condensation of the acetyl group of acetyl-CoA with 3-methyl-2-oxobutanoate (2-ketoisovalerate) to form 3-carboxy-3-hydroxy-4-methylpentanoate (2-isopropylmalate). The sequence is that of 2-isopropylmalate synthase from Dechloromonas aromatica (strain RCB).